The primary structure comprises 117 residues: Large ribosomal subunit protein bL20 (117 aa).

Belongs to the bacterial ribosomal protein bL20 family.

Binds directly to 23S ribosomal RNA and is necessary for the in vitro assembly process of the 50S ribosomal subunit. It is not involved in the protein synthesizing functions of that subunit. The sequence is that of Large ribosomal subunit protein bL20 from Marinobacter nauticus (strain ATCC 700491 / DSM 11845 / VT8) (Marinobacter aquaeolei).